The following is a 201-amino-acid chain: Lipopolysaccharide core heptose(II)-phosphate phosphatase (201 aa).

The first 33 residues, 1–33 (MLAFTLRFIKNKRYFAILAGALVIIAGLASQHA), serve as a signal peptide directing secretion.

It belongs to the phosphoglycerate mutase family. Ais subfamily.

It is found in the periplasm. It participates in bacterial outer membrane biogenesis; lipopolysaccharide metabolism. Catalyzes the dephosphorylation of heptose(II) of the outer membrane lipopolysaccharide core. This Salmonella typhi protein is Lipopolysaccharide core heptose(II)-phosphate phosphatase.